Reading from the N-terminus, the 275-residue chain is Large ribosomal subunit protein uL2 (275 aa).

Residues M225 to K275 form a disordered region. Basic residues predominate over residues T258 to K275.

Belongs to the universal ribosomal protein uL2 family. As to quaternary structure, part of the 50S ribosomal subunit. Forms a bridge to the 30S subunit in the 70S ribosome.

Its function is as follows. One of the primary rRNA binding proteins. Required for association of the 30S and 50S subunits to form the 70S ribosome, for tRNA binding and peptide bond formation. It has been suggested to have peptidyltransferase activity; this is somewhat controversial. Makes several contacts with the 16S rRNA in the 70S ribosome. This chain is Large ribosomal subunit protein uL2, found in Desulforudis audaxviator (strain MP104C).